The sequence spans 230 residues: Cytochrome c oxidase subunit 2 (230 aa).

Residues 1–29 (NNFFQGYNLLFQHSLFASYMDWFHAFNCS) are Mitochondrial intermembrane-facing. Residues 30–50 (LLLGVLVFVTLLFGYLIFSTF) form a helical membrane-spanning segment. The Mitochondrial matrix portion of the chain corresponds to 51–63 (YFKSKKIEYQFGE). Residues 64–84 (LLCSIFPTIILLMQMVPSLSL) form a helical membrane-spanning segment. Over 85-230 (LYYYGLMNLD…FKSWCFGTME (146 aa)) the chain is Mitochondrial intermembrane. Residues His163, Cys198, Glu200, Cys202, His206, and Met209 each contribute to the Cu cation site. Mg(2+) is bound at residue Glu200.

The protein belongs to the cytochrome c oxidase subunit 2 family. As to quaternary structure, component of the cytochrome c oxidase (complex IV, CIV), a multisubunit enzyme composed of a catalytic core of 3 subunits and several supernumerary subunits. The complex exists as a monomer or a dimer and forms supercomplexes (SCs) in the inner mitochondrial membrane with ubiquinol-cytochrome c oxidoreductase (cytochrome b-c1 complex, complex III, CIII). It depends on Cu cation as a cofactor.

It is found in the mitochondrion inner membrane. It catalyses the reaction 4 Fe(II)-[cytochrome c] + O2 + 8 H(+)(in) = 4 Fe(III)-[cytochrome c] + 2 H2O + 4 H(+)(out). Its function is as follows. Component of the cytochrome c oxidase, the last enzyme in the mitochondrial electron transport chain which drives oxidative phosphorylation. The respiratory chain contains 3 multisubunit complexes succinate dehydrogenase (complex II, CII), ubiquinol-cytochrome c oxidoreductase (cytochrome b-c1 complex, complex III, CIII) and cytochrome c oxidase (complex IV, CIV), that cooperate to transfer electrons derived from NADH and succinate to molecular oxygen, creating an electrochemical gradient over the inner membrane that drives transmembrane transport and the ATP synthase. Cytochrome c oxidase is the component of the respiratory chain that catalyzes the reduction of oxygen to water. Electrons originating from reduced cytochrome c in the intermembrane space (IMS) are transferred via the dinuclear copper A center (CU(A)) of subunit 2 and heme A of subunit 1 to the active site in subunit 1, a binuclear center (BNC) formed by heme A3 and copper B (CU(B)). The BNC reduces molecular oxygen to 2 water molecules using 4 electrons from cytochrome c in the IMS and 4 protons from the mitochondrial matrix. The chain is Cytochrome c oxidase subunit 2 (cox-2) from Caenorhabditis remanei (Caenorhabditis vulgaris).